The sequence spans 296 residues: Phosphatidylglycerol--prolipoprotein diacylglyceryl transferase (296 aa).

4 consecutive transmembrane segments (helical) span residues 10–30 (IAFSLGPVQVHWYGLMYLAAF), 57–77 (LLFYGMLGVVLGGRIGYMLFY), 92–112 (VWEGGMSFHGGLLGVLIACWL), and 119–139 (LHFFDVMDFVAPLVPLGLGFG). Arg-140 contacts a 1,2-diacyl-sn-glycero-3-phospho-(1'-sn-glycerol). The next 3 helical transmembrane spans lie at 194–214 (QLYEAALEGVVMFVVLWTFSM), 220–240 (YAVSGLFALLYGVFRFIVEFV), and 254–274 (WLTMGQILSLPLIAVGLVLLA).

It belongs to the Lgt family.

The protein resides in the cell inner membrane. The enzyme catalyses L-cysteinyl-[prolipoprotein] + a 1,2-diacyl-sn-glycero-3-phospho-(1'-sn-glycerol) = an S-1,2-diacyl-sn-glyceryl-L-cysteinyl-[prolipoprotein] + sn-glycerol 1-phosphate + H(+). The protein operates within protein modification; lipoprotein biosynthesis (diacylglyceryl transfer). In terms of biological role, catalyzes the transfer of the diacylglyceryl group from phosphatidylglycerol to the sulfhydryl group of the N-terminal cysteine of a prolipoprotein, the first step in the formation of mature lipoproteins. This Xanthomonas euvesicatoria pv. vesicatoria (strain 85-10) (Xanthomonas campestris pv. vesicatoria) protein is Phosphatidylglycerol--prolipoprotein diacylglyceryl transferase.